Here is a 60-residue protein sequence, read N- to C-terminus: Large ribosomal subunit protein bL32 (60 aa).

The protein belongs to the bacterial ribosomal protein bL32 family.

This is Large ribosomal subunit protein bL32 from Pseudothermotoga lettingae (strain ATCC BAA-301 / DSM 14385 / NBRC 107922 / TMO) (Thermotoga lettingae).